We begin with the raw amino-acid sequence, 142 residues long: Large ribosomal subunit protein uL11 (142 aa).

Belongs to the universal ribosomal protein uL11 family. Part of the ribosomal stalk of the 50S ribosomal subunit. Interacts with L10 and the large rRNA to form the base of the stalk. L10 forms an elongated spine to which L12 dimers bind in a sequential fashion forming a multimeric L10(L12)X complex. In terms of processing, one or more lysine residues are methylated.

In terms of biological role, forms part of the ribosomal stalk which helps the ribosome interact with GTP-bound translation factors. This chain is Large ribosomal subunit protein uL11, found in Haemophilus ducreyi (strain 35000HP / ATCC 700724).